The following is an 82-amino-acid chain: Small ribosomal subunit protein bS16 (82 aa).

This sequence belongs to the bacterial ribosomal protein bS16 family.

This is Small ribosomal subunit protein bS16 from Histophilus somni (strain 2336) (Haemophilus somnus).